A 417-amino-acid polypeptide reads, in one-letter code: Voltage-gated potassium channel Kch (417 aa).

Topologically, residues 1 to 21 (MSHWATFKQTATNLWVTLRHD) are cytoplasmic. A helical membrane pass occupies residues 22–41 (ILALAVFLNGLLIFKTIYGM). The Periplasmic portion of the chain corresponds to 42-63 (SVNLLDIFHIKAFSELDLSLLA). A helical transmembrane segment spans residues 64–83 (NAPLFMLGVFLVLNSIGLLF). The Cytoplasmic segment spans residues 84 to 86 (RAK). The chain crosses the membrane as a helical span at residues 87–104 (LAWAISIILLLIALIYTL). The Periplasmic portion of the chain corresponds to 105 to 110 (HFYPWL). A helical membrane pass occupies residues 111 to 127 (KFSIGFCIFTLVFLLIL). At 128 to 140 (RKDFSHSSAAAGT) the chain is on the cytoplasmic side. A helical membrane pass occupies residues 141 to 160 (IFAFISFTTLLFYSTYGALY). At 161–199 (LSEGFNPRIESLMTAFYFSIETMSTVGYGDIVPVSESAR) the chain is on the periplasmic side. Positions 185–190 (TVGYGD) match the Selectivity filter motif. A helical membrane pass occupies residues 200–220 (LFTISVIISGITVFATSMTSI). The Cytoplasmic segment spans residues 221-417 (FGPLIRGGFN…KADSKESAQK (197 aa)). The RCK N-terminal domain maps to 243–363 (KDHFIVCGHS…IKMVHPDIIL (121 aa)).

It belongs to the potassium channel family. As to quaternary structure, dimer.

Its subcellular location is the cell inner membrane. Its function is as follows. K(+)-specific ion channel. May play a role in the defense against osmotic shock. The sequence is that of Voltage-gated potassium channel Kch (kch) from Escherichia coli (strain K12).